Reading from the N-terminus, the 738-residue chain is DNA topoisomerase 4 subunit A (738 aa).

Positions 32–496 (LPDVRDGLKP…SFEEVDLTNQ (465 aa)) constitute a Topo IIA-type catalytic domain. Residue Tyr120 is the O-(5'-phospho-DNA)-tyrosine intermediate of the active site.

This sequence belongs to the type II topoisomerase GyrA/ParC subunit family. ParC type 1 subfamily. In terms of assembly, heterotetramer composed of ParC and ParE.

The protein resides in the cell membrane. The enzyme catalyses ATP-dependent breakage, passage and rejoining of double-stranded DNA.. Functionally, topoisomerase IV is essential for chromosome segregation. It relaxes supercoiled DNA. Performs the decatenation events required during the replication of a circular DNA molecule. The chain is DNA topoisomerase 4 subunit A from Rickettsia prowazekii (strain Madrid E).